An 87-amino-acid polypeptide reads, in one-letter code: Large ribosomal subunit protein bL31B (87 aa).

Belongs to the bacterial ribosomal protein bL31 family. Type B subfamily. In terms of assembly, part of the 50S ribosomal subunit.

The chain is Large ribosomal subunit protein bL31B from Burkholderia vietnamiensis (strain G4 / LMG 22486) (Burkholderia cepacia (strain R1808)).